Reading from the N-terminus, the 798-residue chain is Phenylalanine--tRNA ligase beta subunit (798 aa).

The tRNA-binding domain occupies 39-148; it reads SKHLGGFVVG…VTLAVGASLL (110 aa). Residues 401–476 form the B5 domain; sequence DWQKSIVLRP…RINGYDNIPA (76 aa). Residues Asp-454, Asp-460, Glu-463, and Glu-464 each coordinate Mg(2+). One can recognise an FDX-ACB domain in the interval 704–797; sequence SALQPLDRDF…VAKATGGELR (94 aa).

It belongs to the phenylalanyl-tRNA synthetase beta subunit family. Type 1 subfamily. In terms of assembly, tetramer of two alpha and two beta subunits. Requires Mg(2+) as cofactor.

Its subcellular location is the cytoplasm. The catalysed reaction is tRNA(Phe) + L-phenylalanine + ATP = L-phenylalanyl-tRNA(Phe) + AMP + diphosphate + H(+). The protein is Phenylalanine--tRNA ligase beta subunit of Paramagnetospirillum magneticum (strain ATCC 700264 / AMB-1) (Magnetospirillum magneticum).